The following is an 88-amino-acid chain: Small ribosomal subunit protein bS20 (88 aa).

Residues 1–27 (MANSKSAKKRALQSEKRRQHNASRRSM) are disordered.

This sequence belongs to the bacterial ribosomal protein bS20 family.

Its function is as follows. Binds directly to 16S ribosomal RNA. This chain is Small ribosomal subunit protein bS20, found in Shewanella loihica (strain ATCC BAA-1088 / PV-4).